Reading from the N-terminus, the 329-residue chain is Indolepyruvate C-methyltransferase (329 aa).

It belongs to the methyltransferase superfamily.

It catalyses the reaction indole-3-pyruvate + S-adenosyl-L-methionine = (R)-3-(indol-3-yl)-2-oxobutanoate + S-adenosyl-L-homocysteine + H(+). Strongly inhibited by the thiol reagents p-chloromercuribenzoate and N-ethylmaleimide. Partially inhibited by o-phenanthroline and 2,2'-dipyridyl. Competitively inhibited by L-tryptophan and indolmycin. Functionally, involved in the biosynthesis of the antibiotic indolmycin, an inhibitor of the bacterial tryptophan-tRNA synthetases. Catalyzes the transfer of a methyl group from S-adenosyl-L-methionine to position 3 of the aliphatic side chain of (indol-3-yl)pyruvate to yield 3-methylindolepyruvate. The polypeptide is Indolepyruvate C-methyltransferase (Streptomyces griseus).